Here is a 697-residue protein sequence, read N- to C-terminus: Methionine--tRNA ligase (697 aa).

The 'HIGH' region motif lies at proline 12–histidine 22. Residues cysteine 143, cysteine 146, cysteine 156, and cysteine 159 each contribute to the Zn(2+) site. A 'KMSKS' region motif is present at residues lysine 342 to serine 346. Residue lysine 345 coordinates ATP. The segment at phenylalanine 557–valine 577 is disordered. Positions aspartate 591–arginine 697 constitute a tRNA-binding domain.

It belongs to the class-I aminoacyl-tRNA synthetase family. MetG type 1 subfamily. In terms of assembly, homodimer. Zn(2+) serves as cofactor.

Its subcellular location is the cytoplasm. It carries out the reaction tRNA(Met) + L-methionine + ATP = L-methionyl-tRNA(Met) + AMP + diphosphate. Is required not only for elongation of protein synthesis but also for the initiation of all mRNA translation through initiator tRNA(fMet) aminoacylation. This Methylibium petroleiphilum (strain ATCC BAA-1232 / LMG 22953 / PM1) protein is Methionine--tRNA ligase.